A 232-amino-acid chain; its full sequence is MSEVKDVIVQGLWKNNSALVQLLGMCPLLAVTSTATNALGLGLATTLVLTLTNLTISSLRRWTPAEIRIPIYVMIIASVVSVVQMLINAYAFGLYQSLGIFIPLIVTNCIVVGRAEAFAAKKGPALSALDGFSIGMGATCAMFVLGSLREILGNGTLFDGADSLLGSWAKVLRIEVFHTDTPFLLAMLPPGAFIGLGMMLAVKYLIDERSKQRKARAARAVSVAPADVTGKA.

The next 5 membrane-spanning stretches (helical) occupy residues 39–59 (LGLG…ISSL), 69–89 (IPIY…LINA), 92–112 (FGLY…CIVV), 125–145 (ALSA…MFVL), and 182–202 (PFLL…MLAV).

This sequence belongs to the NqrDE/RnfAE family. The complex is composed of six subunits: RnfA, RnfB, RnfC, RnfD, RnfE and RnfG.

The protein localises to the cell inner membrane. Its function is as follows. Part of a membrane-bound complex that couples electron transfer with translocation of ions across the membrane. In Klebsiella pneumoniae (strain 342), this protein is Ion-translocating oxidoreductase complex subunit E.